The primary structure comprises 115 residues: uncharacterized protein (115 aa).

A signal peptide spans 1-26; sequence MNFKKTVVSALSISALALSVSGVASA. The BIG2 domain occupies 36-114; it reads VKNISISPTH…AVFGKVYVTV (79 aa).

This is an uncharacterized protein from Bacillus subtilis (strain 168).